Here is a 500-residue protein sequence, read N- to C-terminus: Protein psiE (500 aa).

Residues 1 to 18 (MKLISVLITFLLATVIYS) form the signal peptide. N-linked (GlcNAc...) asparagine glycosylation is present at Asn59. Positions 114 to 256 (TYDTTRKIYV…KDYCGVCQGD (143 aa)) constitute a PA14 domain. Residues Asn314, Asn341, Asn366, Asn420, and Asn469 are each glycosylated (N-linked (GlcNAc...) asparagine).

This sequence belongs to the prespore-cell-inducing factor family.

It is found in the secreted. This Dictyostelium discoideum (Social amoeba) protein is Protein psiE (psiE).